We begin with the raw amino-acid sequence, 283 residues long: Phosphatidylglycerol--prolipoprotein diacylglyceryl transferase (283 aa).

Helical transmembrane passes span leucine 14 to leucine 34, methionine 56 to tyrosine 76, and isoleucine 88 to alanine 108. A 1,2-diacyl-sn-glycero-3-phospho-(1'-sn-glycerol) is bound at residue arginine 139. Residues methionine 258–glycine 278 traverse the membrane as a helical segment.

It belongs to the Lgt family.

The protein localises to the cell inner membrane. It catalyses the reaction L-cysteinyl-[prolipoprotein] + a 1,2-diacyl-sn-glycero-3-phospho-(1'-sn-glycerol) = an S-1,2-diacyl-sn-glyceryl-L-cysteinyl-[prolipoprotein] + sn-glycerol 1-phosphate + H(+). It participates in protein modification; lipoprotein biosynthesis (diacylglyceryl transfer). Functionally, catalyzes the transfer of the diacylglyceryl group from phosphatidylglycerol to the sulfhydryl group of the N-terminal cysteine of a prolipoprotein, the first step in the formation of mature lipoproteins. The chain is Phosphatidylglycerol--prolipoprotein diacylglyceryl transferase from Chromobacterium violaceum (strain ATCC 12472 / DSM 30191 / JCM 1249 / CCUG 213 / NBRC 12614 / NCIMB 9131 / NCTC 9757 / MK).